Reading from the N-terminus, the 338-residue chain is MLIAQRPTLSEETVDEFRSRFVIEPLEPGFGYTLGNSLRRTLLSSIPGASVTSIKIDNVLHEFSTIEGVKEDVTEVILNLKGLVVSSEHDEPVTMYLRKSGAGDVTAADIAPPAGVEVHNPDLKIATLSDKGKLEMELVVERGRGYVSAVQNKGADNEIGRMPVDSIYSPVLKVTYKVEATRVEQRTDFDKLVIDVETKPSIRPRDAIASAGKTLVELFGLARELNVEAEGIDIGPSPVDEQLAADLALPVEDLQLTVRSYNCLKREGIHTVGELISRSEQDLLDIRNFGAKSIDEVKAKLVEMGLSLKDSAPGFDPHAALAAYGDDDDDAFVEDEQY.

The interval 1–226 (MLIAQRPTLS…ELFGLARELN (226 aa)) is alpha N-terminal domain (alpha-NTD). The interval 240-338 (DEQLAADLAL…DDAFVEDEQY (99 aa)) is alpha C-terminal domain (alpha-CTD).

This sequence belongs to the RNA polymerase alpha chain family. In terms of assembly, homodimer. The RNAP catalytic core consists of 2 alpha, 1 beta, 1 beta' and 1 omega subunit. When a sigma factor is associated with the core the holoenzyme is formed, which can initiate transcription.

It catalyses the reaction RNA(n) + a ribonucleoside 5'-triphosphate = RNA(n+1) + diphosphate. DNA-dependent RNA polymerase catalyzes the transcription of DNA into RNA using the four ribonucleoside triphosphates as substrates. The chain is DNA-directed RNA polymerase subunit alpha from Nocardioides sp. (strain ATCC BAA-499 / JS614).